Reading from the N-terminus, the 360-residue chain is Phospho-N-acetylmuramoyl-pentapeptide-transferase (360 aa).

The next 10 helical transmembrane spans lie at 26–46 (AILGLLTALVFSLWWGPILIK), 73–93 (TMGGILILAGIFISVLLWGDL), 97–117 (YVLVTLFVLASFGVIGFIDDY), 135–155 (ALQSIAALVVAVYLYSSSTMV), 168–188 (IMPQLGFMFILLAYFTIVGAS), 199–219 (GLAIMPTVMVAAAFALIAYLS), 236–256 (AGELVIVCTAMVGAGLGFLWF), 263–283 (VFMGDVGSLALGAALGVIAIL), 288–308 (ILLVIMGGVFVMETVSVILQV), and 338–358 (VIVRFWIISLFLVLLGLATLK).

It belongs to the glycosyltransferase 4 family. MraY subfamily. Mg(2+) serves as cofactor.

The protein localises to the cell inner membrane. It catalyses the reaction UDP-N-acetyl-alpha-D-muramoyl-L-alanyl-gamma-D-glutamyl-meso-2,6-diaminopimeloyl-D-alanyl-D-alanine + di-trans,octa-cis-undecaprenyl phosphate = di-trans,octa-cis-undecaprenyl diphospho-N-acetyl-alpha-D-muramoyl-L-alanyl-D-glutamyl-meso-2,6-diaminopimeloyl-D-alanyl-D-alanine + UMP. The protein operates within cell wall biogenesis; peptidoglycan biosynthesis. Functionally, catalyzes the initial step of the lipid cycle reactions in the biosynthesis of the cell wall peptidoglycan: transfers peptidoglycan precursor phospho-MurNAc-pentapeptide from UDP-MurNAc-pentapeptide onto the lipid carrier undecaprenyl phosphate, yielding undecaprenyl-pyrophosphoryl-MurNAc-pentapeptide, known as lipid I. The sequence is that of Phospho-N-acetylmuramoyl-pentapeptide-transferase from Shewanella frigidimarina (strain NCIMB 400).